The following is a 752-amino-acid chain: Xanthine dehydrogenase molybdenum-binding subunit (752 aa).

Mo-molybdopterin contacts are provided by Gln206, Phe237, Arg350, and Ala516.

It belongs to the xanthine dehydrogenase family. Heterotrimer of XdhA, XdhB and XdhC. The cofactor is Mo-molybdopterin.

The catalysed reaction is xanthine + NAD(+) + H2O = urate + NADH + H(+). It catalyses the reaction hypoxanthine + NAD(+) + H2O = xanthine + NADH + H(+). It participates in purine metabolism; hypoxanthine degradation; urate from hypoxanthine: step 1/2. Its pathway is purine metabolism; hypoxanthine degradation; urate from hypoxanthine: step 2/2. In terms of biological role, presumed to be a dehydrogenase, but possibly an oxidase. Participates in limited purine salvage (requires aspartate) but does not support aerobic growth on purines as the sole carbon source (purine catabolism). The polypeptide is Xanthine dehydrogenase molybdenum-binding subunit (xdhA) (Escherichia coli O157:H7).